We begin with the raw amino-acid sequence, 545 residues long: Membrane protein insertase YidC (545 aa).

6 helical membrane passes run alanine 10–serine 30, leucine 319–proline 339, tryptophan 341–phenylalanine 361, isoleucine 407–valine 427, isoleucine 467–serine 487, and methionine 502–isoleucine 522.

It belongs to the OXA1/ALB3/YidC family. Type 1 subfamily. Interacts with the Sec translocase complex via SecD. Specifically interacts with transmembrane segments of nascent integral membrane proteins during membrane integration.

The protein resides in the cell inner membrane. Required for the insertion and/or proper folding and/or complex formation of integral membrane proteins into the membrane. Involved in integration of membrane proteins that insert both dependently and independently of the Sec translocase complex, as well as at least some lipoproteins. Aids folding of multispanning membrane proteins. The polypeptide is Membrane protein insertase YidC (Borrelia duttonii (strain Ly)).